A 374-amino-acid polypeptide reads, in one-letter code: Pulmonary surfactant-associated protein D (374 aa).

An N-terminal signal peptide occupies residues methionine 1–glycine 19. Cysteine 34 and cysteine 39 each carry S-nitrosocysteine. The tract at residues serine 40–proline 221 is disordered. The region spanning glycine 45–proline 221 is the Collagen-like domain. Residues arginine 49–aspartate 64 show a composition bias toward basic and acidic residues. At proline 77 the chain carries Hydroxyproline. At lysine 86 the chain carries 5-hydroxylysine. Asparagine 89 carries an N-linked (GlcNAc...) asparagine glycan. A Hydroxyproline modification is found at proline 95. Position 98 is a 5-hydroxylysine (lysine 98). A Phosphoserine modification is found at serine 109. Composition is skewed to low complexity over residues lysine 137–proline 163 and proline 170–proline 200. 2 positions are modified to hydroxyproline: proline 170 and proline 176. Residues lysine 203–lysine 215 are compositionally biased toward basic and acidic residues. Residues aspartate 222–phenylalanine 253 are a coiled coil. One can recognise a C-type lectin domain in the interval valine 259–phenylalanine 374. Cystine bridges form between cysteine 280-cysteine 372 and cysteine 350-cysteine 364.

This sequence belongs to the SFTPD family. In terms of assembly, oligomeric complex of 4 set of homotrimers. In terms of processing, S-nitrosylation at Cys-34 and Cys-39 alters the quaternary structure which results in a pro-inflammatory chemoattractive signaling activity with macrophages.

It is found in the secreted. The protein resides in the extracellular space. Its subcellular location is the extracellular matrix. It localises to the surface film. Its function is as follows. Contributes to the lung's defense against inhaled microorganisms, organic antigens and toxins. Interacts with compounds such as bacterial lipopolysaccharides, oligosaccharides and fatty acids and modulates leukocyte action in immune response. May participate in the extracellular reorganization or turnover of pulmonary surfactant. Binds strongly maltose residues and to a lesser extent other alpha-glucosyl moieties. This is Pulmonary surfactant-associated protein D (Sftpd) from Rattus norvegicus (Rat).